A 350-amino-acid chain; its full sequence is Protein RecA (350 aa).

68–75 (GPESSGKT) is an ATP binding site.

Belongs to the RecA family.

The protein localises to the cytoplasm. In terms of biological role, can catalyze the hydrolysis of ATP in the presence of single-stranded DNA, the ATP-dependent uptake of single-stranded DNA by duplex DNA, and the ATP-dependent hybridization of homologous single-stranded DNAs. It interacts with LexA causing its activation and leading to its autocatalytic cleavage. The polypeptide is Protein RecA (Mycolicibacterium vanbaalenii (strain DSM 7251 / JCM 13017 / BCRC 16820 / KCTC 9966 / NRRL B-24157 / PYR-1) (Mycobacterium vanbaalenii)).